A 372-amino-acid chain; its full sequence is Transaldolase 2 (372 aa).

Lys140 functions as the Schiff-base intermediate with substrate in the catalytic mechanism.

This sequence belongs to the transaldolase family. Type 2 subfamily.

The protein resides in the cytoplasm. The catalysed reaction is D-sedoheptulose 7-phosphate + D-glyceraldehyde 3-phosphate = D-erythrose 4-phosphate + beta-D-fructose 6-phosphate. It functions in the pathway carbohydrate degradation; pentose phosphate pathway; D-glyceraldehyde 3-phosphate and beta-D-fructose 6-phosphate from D-ribose 5-phosphate and D-xylulose 5-phosphate (non-oxidative stage): step 2/3. Transaldolase is important for the balance of metabolites in the pentose-phosphate pathway. The polypeptide is Transaldolase 2 (Streptomyces coelicolor (strain ATCC BAA-471 / A3(2) / M145)).